The primary structure comprises 492 residues: Transcription factor IIIB 60 kDa subunit (492 aa).

Residues 1 to 30 (MGCPNCGSTTFESDTASGNTYCTQCGVVVE) form a TFIIB-type zinc finger. Zn(2+) is bound by residues Cys3, Cys6, Cys22, and Cys25. The interval 440–468 (QPRKRRRYRPRDSTSDGIADTAAESAKEM) is disordered.

The protein belongs to the TFIIB family. In terms of assembly, TFIIIB comprises the TATA-binding protein (TBP), the B-related factor (BRF) and a third subunit (Potential). Interacts with maf1.

It localises to the nucleus. In terms of biological role, general activator of RNA polymerase III transcription. This is Transcription factor IIIB 60 kDa subunit (brf1) from Schizosaccharomyces pombe (strain 972 / ATCC 24843) (Fission yeast).